The following is a 215-amino-acid chain: Myelin protein zero-like protein 2 (215 aa).

An N-terminal signal peptide occupies residues Met1–Ala26. The region spanning Val27 to Ser141 is the Ig-like V-type domain. Residues Val27–Leu154 lie on the Extracellular side of the membrane. N-linked (GlcNAc...) asparagine glycans are attached at residues Asn39 and Asn118. The cysteines at positions 47 and 123 are disulfide-linked. A helical membrane pass occupies residues Ala155–Phe175. The Cytoplasmic segment spans residues Gln176–Asp215.

It belongs to the myelin P0 protein family.

It localises to the membrane. Mediates homophilic cell-cell adhesion. The polypeptide is Myelin protein zero-like protein 2 (MPZL2) (Bos taurus (Bovine)).